Consider the following 615-residue polypeptide: DNA mismatch repair protein MutL (615 aa).

Over residues 378–391 the composition is skewed to low complexity; the sequence is PAPASGSRPAAPWP. The segment at 378–397 is disordered; sequence PAPASGSRPAAPWPNAQPGY.

The protein belongs to the DNA mismatch repair MutL/HexB family.

This protein is involved in the repair of mismatches in DNA. It is required for dam-dependent methyl-directed DNA mismatch repair. May act as a 'molecular matchmaker', a protein that promotes the formation of a stable complex between two or more DNA-binding proteins in an ATP-dependent manner without itself being part of a final effector complex. The sequence is that of DNA mismatch repair protein MutL from Escherichia coli O127:H6 (strain E2348/69 / EPEC).